We begin with the raw amino-acid sequence, 119 residues long: Large ribosomal subunit protein bL20 (119 aa).

Belongs to the bacterial ribosomal protein bL20 family.

Its function is as follows. Binds directly to 23S ribosomal RNA and is necessary for the in vitro assembly process of the 50S ribosomal subunit. It is not involved in the protein synthesizing functions of that subunit. The chain is Large ribosomal subunit protein bL20 from Nitrosomonas eutropha (strain DSM 101675 / C91 / Nm57).